The chain runs to 156 residues: Small ribosomal subunit protein uS7 (156 aa).

It belongs to the universal ribosomal protein uS7 family. Part of the 30S ribosomal subunit. Contacts proteins S9 and S11.

One of the primary rRNA binding proteins, it binds directly to 16S rRNA where it nucleates assembly of the head domain of the 30S subunit. Is located at the subunit interface close to the decoding center, probably blocks exit of the E-site tRNA. The polypeptide is Small ribosomal subunit protein uS7 (Staphylococcus saprophyticus subsp. saprophyticus (strain ATCC 15305 / DSM 20229 / NCIMB 8711 / NCTC 7292 / S-41)).